The sequence spans 562 residues: Sesquiterpene synthase (562 aa).

Mg(2+) is bound by residues aspartate 315, aspartate 319, and glutamate 467. The DDXXD motif motif lies at 315–319; sequence DDIYD.

It belongs to the terpene synthase family. Tpsa subfamily. Mg(2+) is required as a cofactor. Requires Mn(2+) as cofactor.

Functionally, catalyzes the formation of beta-elemol, guaiol and bulnesol. The chain is Sesquiterpene synthase from Santalum spicatum (Australian sandalwood).